We begin with the raw amino-acid sequence, 327 residues long: GMP reductase (327 aa).

Cys-175 serves as the catalytic Thioimidate intermediate. 204-227 (IIADGGIRTHGDVAKSIRFGATMV) lines the NADP(+) pocket.

It belongs to the IMPDH/GMPR family. GuaC type 2 subfamily.

The enzyme catalyses IMP + NH4(+) + NADP(+) = GMP + NADPH + 2 H(+). In terms of biological role, catalyzes the irreversible NADPH-dependent deamination of GMP to IMP. It functions in the conversion of nucleobase, nucleoside and nucleotide derivatives of G to A nucleotides, and in maintaining the intracellular balance of A and G nucleotides. The polypeptide is GMP reductase (Bacillus thuringiensis subsp. konkukian (strain 97-27)).